We begin with the raw amino-acid sequence, 361 residues long: Phospho-N-acetylmuramoyl-pentapeptide-transferase (361 aa).

10 helical membrane passes run 25–45, 72–92, 95–115, 135–155, 169–189, 200–220, 240–260, 264–284, 289–309, and 338–358; these read TGGAVVTGALFVFLCGPWIID, TPTMGGLMILSGLTVGTVLWA, LNPYVWIVLAVTLGFGFVGFY, LLIEFAIAGAACFALVWLGRG, VVLNLGWYFVIFGAFVIVGAG, GLAIVPVMIAAASFGMISYLV, LAVLCGALLGAGLGFLWFNAP, IFMGDTGSLALGGMLGSIAVA, IVLAVIGGLFVLEAVSVIVQV, and QIVIRFWIIAVILALAGLSTL.

The protein belongs to the glycosyltransferase 4 family. MraY subfamily. The cofactor is Mg(2+).

It localises to the cell inner membrane. The enzyme catalyses UDP-N-acetyl-alpha-D-muramoyl-L-alanyl-gamma-D-glutamyl-meso-2,6-diaminopimeloyl-D-alanyl-D-alanine + di-trans,octa-cis-undecaprenyl phosphate = di-trans,octa-cis-undecaprenyl diphospho-N-acetyl-alpha-D-muramoyl-L-alanyl-D-glutamyl-meso-2,6-diaminopimeloyl-D-alanyl-D-alanine + UMP. The protein operates within cell wall biogenesis; peptidoglycan biosynthesis. Its function is as follows. Catalyzes the initial step of the lipid cycle reactions in the biosynthesis of the cell wall peptidoglycan: transfers peptidoglycan precursor phospho-MurNAc-pentapeptide from UDP-MurNAc-pentapeptide onto the lipid carrier undecaprenyl phosphate, yielding undecaprenyl-pyrophosphoryl-MurNAc-pentapeptide, known as lipid I. The protein is Phospho-N-acetylmuramoyl-pentapeptide-transferase of Rhodopseudomonas palustris (strain HaA2).